A 92-amino-acid chain; its full sequence is Putative septation protein SpoVG (92 aa).

The protein belongs to the SpoVG family.

Its function is as follows. Could be involved in septation. The sequence is that of Putative septation protein SpoVG from Clostridium botulinum (strain Eklund 17B / Type B).